The sequence spans 459 residues: Ribulose bisphosphate carboxylase large chain (459 aa).

N6,N6,N6-trimethyllysine is present on Lys4. 2 residues coordinate substrate: Asn113 and Thr163. The active-site Proton acceptor is Lys165. A substrate-binding site is contributed by Lys167. Mg(2+) contacts are provided by Lys191, Asp193, and Glu194. Lys191 is subject to N6-carboxylysine. His284 (proton acceptor) is an active-site residue. Arg285, His317, and Ser369 together coordinate substrate.

Belongs to the RuBisCO large chain family. Type I subfamily. As to quaternary structure, heterohexadecamer of 8 large chains and 8 small chains; disulfide-linked. The disulfide link is formed within the large subunit homodimers. Mg(2+) serves as cofactor. In terms of processing, the disulfide bond which can form in the large chain dimeric partners within the hexadecamer appears to be associated with oxidative stress and protein turnover.

Its subcellular location is the plastid. The protein resides in the chloroplast. The catalysed reaction is 2 (2R)-3-phosphoglycerate + 2 H(+) = D-ribulose 1,5-bisphosphate + CO2 + H2O. The enzyme catalyses D-ribulose 1,5-bisphosphate + O2 = 2-phosphoglycolate + (2R)-3-phosphoglycerate + 2 H(+). In terms of biological role, ruBisCO catalyzes two reactions: the carboxylation of D-ribulose 1,5-bisphosphate, the primary event in carbon dioxide fixation, as well as the oxidative fragmentation of the pentose substrate in the photorespiration process. Both reactions occur simultaneously and in competition at the same active site. The polypeptide is Ribulose bisphosphate carboxylase large chain (Apium graveolens (Celery)).